The chain runs to 336 residues: 4-hydroxy-3-methylbut-2-enyl diphosphate reductase (336 aa).

Cys-37 contacts [4Fe-4S] cluster. (2E)-4-hydroxy-3-methylbut-2-enyl diphosphate contacts are provided by His-66 and His-99. Residues His-66 and His-99 each coordinate dimethylallyl diphosphate. His-66 and His-99 together coordinate isopentenyl diphosphate. Residue Cys-121 coordinates [4Fe-4S] cluster. A (2E)-4-hydroxy-3-methylbut-2-enyl diphosphate-binding site is contributed by His-149. Residue His-149 coordinates dimethylallyl diphosphate. His-149 lines the isopentenyl diphosphate pocket. Glu-151 acts as the Proton donor in catalysis. Thr-189 serves as a coordination point for (2E)-4-hydroxy-3-methylbut-2-enyl diphosphate. Cys-219 is a [4Fe-4S] cluster binding site. (2E)-4-hydroxy-3-methylbut-2-enyl diphosphate contacts are provided by Ser-247, Ser-248, Asn-249, and Ser-292. The dimethylallyl diphosphate site is built by Ser-247, Ser-248, Asn-249, and Ser-292. Residues Ser-247, Ser-248, Asn-249, and Ser-292 each contribute to the isopentenyl diphosphate site.

The protein belongs to the IspH family. It depends on [4Fe-4S] cluster as a cofactor.

It carries out the reaction isopentenyl diphosphate + 2 oxidized [2Fe-2S]-[ferredoxin] + H2O = (2E)-4-hydroxy-3-methylbut-2-enyl diphosphate + 2 reduced [2Fe-2S]-[ferredoxin] + 2 H(+). It catalyses the reaction dimethylallyl diphosphate + 2 oxidized [2Fe-2S]-[ferredoxin] + H2O = (2E)-4-hydroxy-3-methylbut-2-enyl diphosphate + 2 reduced [2Fe-2S]-[ferredoxin] + 2 H(+). The protein operates within isoprenoid biosynthesis; dimethylallyl diphosphate biosynthesis; dimethylallyl diphosphate from (2E)-4-hydroxy-3-methylbutenyl diphosphate: step 1/1. It functions in the pathway isoprenoid biosynthesis; isopentenyl diphosphate biosynthesis via DXP pathway; isopentenyl diphosphate from 1-deoxy-D-xylulose 5-phosphate: step 6/6. In terms of biological role, catalyzes the conversion of 1-hydroxy-2-methyl-2-(E)-butenyl 4-diphosphate (HMBPP) into a mixture of isopentenyl diphosphate (IPP) and dimethylallyl diphosphate (DMAPP). Acts in the terminal step of the DOXP/MEP pathway for isoprenoid precursor biosynthesis. The sequence is that of 4-hydroxy-3-methylbut-2-enyl diphosphate reductase from Rhodococcus opacus (strain B4).